The sequence spans 98 residues: MALTKIEIAENLVERCGLDKRIAKQFVEDFFEEIRRSLESGEEVKLSGFGNFTVRDKKARPGRNPKTGEDVAVSARRVVVFKAGQKLRERVENAKVKA.

Belongs to the bacterial histone-like protein family. As to quaternary structure, heterodimer of an alpha and a beta chain.

Its function is as follows. This protein is one of the two subunits of integration host factor, a specific DNA-binding protein that functions in genetic recombination as well as in transcriptional and translational control. The chain is Integration host factor subunit alpha from Glaesserella parasuis serovar 5 (strain SH0165) (Haemophilus parasuis).